The sequence spans 71 residues: Protein DP71L (71 aa).

Important for host CHOP inhibition stretches follow at residues 16–18 (VRF) and 57–61 (LSAVL).

The protein belongs to the asfivirus DP71L family. In terms of assembly, interacts (via C-terminus) with host PPP1CB.

Functionally, interacts with the host phosphatase PP1 catalytic subunit (PPP1CB) and recruits it to dephosphorylate EIF2S1/eIF2alpha and therefore restores the host translation that has been shut-down by the host. Also inhibits the EIF2S1/eIF2alpha-ATF4-DDIT3/CHOP pathway. In Ornithodoros (relapsing fever ticks), this protein is Protein DP71L.